We begin with the raw amino-acid sequence, 195 residues long: GTP-dependent dephospho-CoA kinase (195 aa).

Aspartate 49, valine 50, aspartate 68, glutamate 127, and aspartate 150 together coordinate GTP.

It belongs to the GTP-dependent DPCK family.

It carries out the reaction 3'-dephospho-CoA + GTP = GDP + CoA + H(+). It functions in the pathway cofactor biosynthesis; coenzyme A biosynthesis. Its function is as follows. Catalyzes the GTP-dependent phosphorylation of the 3'-hydroxyl group of dephosphocoenzyme A to form coenzyme A (CoA). This chain is GTP-dependent dephospho-CoA kinase, found in Methanosarcina acetivorans (strain ATCC 35395 / DSM 2834 / JCM 12185 / C2A).